Consider the following 181-residue polypeptide: Bifunctional adenosylcobalamin biosynthesis protein CobU (181 aa).

Residues 7-14 and 31-33 contribute to the GTP site; these read GGARSGKS and ATS. The GMP-histidine intermediate role is filled by histidine 47. Residues 48–51, glutamate 59, and glutamate 81 contribute to the GTP site; that span reads KDGR.

It belongs to the CobU/CobP family. Homotrimer.

The enzyme catalyses adenosylcob(III)inamide + GTP = adenosylcob(III)inamide phosphate + GDP + H(+). The catalysed reaction is adenosylcob(III)inamide + ATP = adenosylcob(III)inamide phosphate + ADP + H(+). It carries out the reaction adenosylcob(III)inamide phosphate + GTP + H(+) = adenosylcob(III)inamide-GDP + diphosphate. Its pathway is cofactor biosynthesis; adenosylcobalamin biosynthesis; adenosylcobalamin from cob(II)yrinate a,c-diamide: step 5/7. It participates in cofactor biosynthesis; adenosylcobalamin biosynthesis; adenosylcobalamin from cob(II)yrinate a,c-diamide: step 6/7. Catalyzes ATP-dependent phosphorylation of adenosylcobinamide and addition of GMP to adenosylcobinamide phosphate. The sequence is that of Bifunctional adenosylcobalamin biosynthesis protein CobU (cobU) from Salmonella typhimurium (strain LT2 / SGSC1412 / ATCC 700720).